An 833-amino-acid chain; its full sequence is Disintegrin and metalloproteinase domain-containing protein 17 (833 aa).

An N-terminal signal peptide occupies residues 1-17; it reads MRQCALFLTSLVPIVLA. Positions 223 to 474 constitute a Peptidase M12B domain; it reads NTCKLLVVAD…KAQECFQERS (252 aa). The segment at 301–345 is interaction with classical swine fever virus envelope glycoprotein E2; the sequence is AKSYPNEEKDAWDVKMLLEQFSFDIAEEASKVCLAHLFTYQDFDM. 3 cysteine pairs are disulfide-bonded: cysteine 365–cysteine 469, cysteine 423–cysteine 453, and cysteine 534–cysteine 555. Histidine 405 serves as a coordination point for Zn(2+). Glutamate 406 is a catalytic residue. Zn(2+) contacts are provided by histidine 409 and histidine 415. A Disintegrin domain is found at 475–563; sequence NKVCGNSRVD…ECPPPGNAED (89 aa). The helical transmembrane segment at 672-692 threads the bilayer; the sequence is IVGSVLVFSLMLWIPVSILVH. 2 disordered regions span residues 735–760 and 772–833; these read TPGR…VPVA and QEDP…ETEC. Composition is skewed to basic and acidic residues over residues 777 to 790, 800 to 816, and 824 to 833; these read TDSH…EKDP, SFED…EKAS, and SRVDSKETEC.

In terms of assembly, (Microbial infection) Interacts (via metalloproteinase domain) with classical swine fever virus envelope glycoprotein E2; this interaction allows binding and probably entry of the virus into the cell. As to quaternary structure, interacts with MAD2L1, MAPK14 and MUC1. Interacts with iRhom1/RHBDF1 and iRhom2/RHBDF2. Interacts with FRMD8 via its interaction with iRhom1/RHBDF1 and iRhom2/RHBDF2. Zn(2+) serves as cofactor. In terms of processing, the precursor is cleaved by a furin endopeptidase. Post-translationally, phosphorylated.

The protein resides in the membrane. It carries out the reaction Narrow endopeptidase specificity. Cleaves Pro-Leu-Ala-Gln-Ala-|-Val-Arg-Ser-Ser-Ser in the membrane-bound, 26-kDa form of tumor necrosis factor alpha (TNFalpha). Similarly cleaves other membrane-anchored, cell-surface proteins to 'shed' the extracellular domains.. Transmembrane metalloprotease which mediates the ectodomain shedding of a myriad of transmembrane proteins including adhesion proteins, growth factor precursors and cytokines important for inflammation and immunity. Cleaves the membrane-bound precursor of TNF-alpha to its mature soluble form. Responsible for the proteolytical release of soluble JAM3 from endothelial cells surface. Responsible for the proteolytic release of several other cell-surface proteins, including p75 TNF-receptor, interleukin 1 receptor type II, p55 TNF-receptor, transforming growth factor-alpha, L-selectin, growth hormone receptor, MUC1 and the amyloid precursor protein. Acts as an activator of Notch pathway by mediating cleavage of Notch, generating the membrane-associated intermediate fragment called Notch extracellular truncation (NEXT). Plays a role in the proteolytic processing of ACE2. Plays a role in hemostasis through shedding of GP1BA, the platelet glycoprotein Ib alpha chain. Mediates the proteolytic cleavage of LAG3, leading to release the secreted form of LAG3. Mediates the proteolytic cleavage of IL6R, leading to the release of secreted form of IL6R. Mediates the proteolytic cleavage and shedding of FCGR3A upon NK cell stimulation, a mechanism that allows for increased NK cell motility and detachment from opsonized target cells. Cleaves TREM2, resulting in shedding of the TREM2 ectodomain. Its function is as follows. (Microbial infection) Acts as a receptor for classical swine fever virus. This Sus scrofa (Pig) protein is Disintegrin and metalloproteinase domain-containing protein 17 (ADAM17).